We begin with the raw amino-acid sequence, 87 residues long: Acylphosphatase (87 aa).

Residues 1–87 (MAWVHGRVQG…EDYQDFRIRY (87 aa)) form the Acylphosphatase-like domain. Catalysis depends on residues Arg-14 and Asn-32.

It belongs to the acylphosphatase family.

It carries out the reaction an acyl phosphate + H2O = a carboxylate + phosphate + H(+). The protein is Acylphosphatase (acyP) of Cronobacter sakazakii (strain ATCC BAA-894) (Enterobacter sakazakii).